A 405-amino-acid chain; its full sequence is Beta-citrylglutamate synthase B (405 aa).

Positions 115-300 constitute an ATP-grasp domain; that stretch reads FQELAGHGVP…VAGIVADFVL (186 aa). Residues lysine 154, 189–199, and arginine 215 each bind ATP; that span reads QEYVKESHGRD. 3 residues coordinate Mg(2+): aspartate 260, glutamate 273, and asparagine 275. Mn(2+)-binding residues include aspartate 260, glutamate 273, and asparagine 275. A disordered region spans residues 359–387; that stretch reads AMSTMSTSSTSSESEADLTETGPTPVGAN. Residues 360-371 are compositionally biased toward low complexity; it reads MSTMSTSSTSSE.

The protein belongs to the RimK family. The cofactor is Mg(2+). Mn(2+) is required as a cofactor.

The protein localises to the cytoplasm. It carries out the reaction citrate + L-glutamate + ATP = beta-citrylglutamate + ADP + phosphate + H(+). It catalyses the reaction N-acetyl-L-aspartate + L-glutamate + ATP = N-acetyl-L-aspartyl-L-glutamate + ADP + phosphate + H(+). Catalyzes the synthesis of beta-citryl-L-glutamate and N-acetyl-L-aspartyl-L-glutamate. Beta-citryl-L-glutamate is synthesized more efficiently than N-acetyl-L-aspartyl-L-glutamate. This Danio rerio (Zebrafish) protein is Beta-citrylglutamate synthase B (rimklb).